The chain runs to 758 residues: Probable adenosylcobalamin-dependent ribonucleoside-triphosphate reductase (758 aa).

A disulfide bridge links Cys-194 with Cys-459. The interval 233–256 (IIIKGQLPPPPPQQQPQQQQQQHG) is disordered. Active-site residues include Cys-448 and Glu-450.

This sequence belongs to the class II ribonucleoside-triphosphate reductase family. In terms of assembly, monomer. The cofactor is adenosylcob(III)alamin.

It carries out the reaction a 2'-deoxyribonucleoside 5'-triphosphate + [thioredoxin]-disulfide + H2O = a ribonucleoside 5'-triphosphate + [thioredoxin]-dithiol. This is Probable adenosylcobalamin-dependent ribonucleoside-triphosphate reductase (rtpR) from Dictyostelium discoideum (Social amoeba).